Reading from the N-terminus, the 266-residue chain is Glutamate racemase (266 aa).

Substrate contacts are provided by residues 9–10 and 41–42; these read DS and YG. Cys-72 functions as the Proton donor/acceptor in the catalytic mechanism. 73–74 provides a ligand contact to substrate; that stretch reads NT. Cys-183 serves as the catalytic Proton donor/acceptor. 184-185 is a binding site for substrate; sequence TH.

The protein belongs to the aspartate/glutamate racemases family.

It carries out the reaction L-glutamate = D-glutamate. It functions in the pathway cell wall biogenesis; peptidoglycan biosynthesis. Provides the (R)-glutamate required for cell wall biosynthesis. In Listeria innocua serovar 6a (strain ATCC BAA-680 / CLIP 11262), this protein is Glutamate racemase.